Consider the following 183-residue polypeptide: MPARLEVYYRETVVPKLMERFKYKSIMMVPRLEKISVNIGVGEAAQEPKLLETAMQELGQITGQKPQVRKAKKAISNFKLREGQAIGCRVTLRRKIMFEFMDRFISVAVPRIRDFRGLSDTSFDGRGNYNVGIREQIIFPEIDIDKVPRINGMDISFVTSAKTDEEAYELLSLLGMPFKKKNQ.

It belongs to the universal ribosomal protein uL5 family. In terms of assembly, part of the 50S ribosomal subunit; part of the 5S rRNA/L5/L18/L25 subcomplex. Contacts the 5S rRNA and the P site tRNA. Forms a bridge to the 30S subunit in the 70S ribosome.

This is one of the proteins that bind and probably mediate the attachment of the 5S RNA into the large ribosomal subunit, where it forms part of the central protuberance. In the 70S ribosome it contacts protein S13 of the 30S subunit (bridge B1b), connecting the 2 subunits; this bridge is implicated in subunit movement. Contacts the P site tRNA; the 5S rRNA and some of its associated proteins might help stabilize positioning of ribosome-bound tRNAs. The sequence is that of Large ribosomal subunit protein uL5 from Chlorobaculum tepidum (strain ATCC 49652 / DSM 12025 / NBRC 103806 / TLS) (Chlorobium tepidum).